The sequence spans 215 residues: Ras-related protein Rab-14 (215 aa).

A2 bears the N-acetylalanine mark. Residues G21, V22, G23, K24, S25, C26, A38, D39, C40, H42, and T43 each coordinate GTP. Residue S25 coordinates Mg(2+). The Switch 1 signature appears at 42-47 (HTIGVE). Mg(2+) contacts are provided by T43 and D66. Residues 68-77 (AGQERFRAVT) carry the Switch 2 motif. The GTP site is built by G69, N124, K125, D127, A155, and K156. Positions 188–215 (SGVQHKPSAPQGGRLTSEPQPQREGCGC) are disordered. Residues C213 and C215 are each lipidated (S-geranylgeranyl cysteine). C215 bears the Cysteine methyl ester mark.

Belongs to the small GTPase superfamily. Rab family. Mg(2+) serves as cofactor.

The protein localises to the recycling endosome. It is found in the early endosome membrane. It localises to the golgi apparatus membrane. Its subcellular location is the golgi apparatus. The protein resides in the trans-Golgi network membrane. The protein localises to the cytoplasmic vesicle. It is found in the phagosome. The enzyme catalyses GTP + H2O = GDP + phosphate + H(+). With respect to regulation, regulated by guanine nucleotide exchange factors (GEFs) including DENND6A and DENND6B which promote the exchange of bound GDP for free GTP. Regulated by GTPase activating proteins (GAPs) which increase the GTP hydrolysis activity. Inhibited by GDP dissociation inhibitors (GDIs) which prevent Rab-GDP dissociation. Its function is as follows. The small GTPases Rab are key regulators of intracellular membrane trafficking, from the formation of transport vesicles to their fusion with membranes. Rabs cycle between an inactive GDP-bound form and an active GTP-bound form that is able to recruit to membranes different set of downstream effectors directly responsible for vesicle formation, movement, tethering and fusion. Involved in membrane trafficking between the Golgi complex and endosomes during early embryonic development. Regulates the Golgi to endosome transport of FGFR-containing vesicles during early development, a key process for developing basement membrane and epiblast and primitive endoderm lineages during early postimplantation development. May act by modulating the kinesin KIF16B-cargo association to endosomes. Regulates, together with its guanine nucleotide exchange factor DENND6A, the specific endocytic transport of ADAM10, N-cadherin/CDH2 shedding and cell-cell adhesion. Mediates endosomal tethering and fusion through the interaction with RUFY1 and RAB4B. Interaction with RAB11FIP1 may function in the process of neurite formation. This Gallus gallus (Chicken) protein is Ras-related protein Rab-14 (RAB14).